We begin with the raw amino-acid sequence, 202 residues long: Methylthioribulose-1-phosphate dehydratase (202 aa).

Zn(2+) is bound by residues histidine 93 and histidine 95.

It belongs to the aldolase class II family. MtnB subfamily. It depends on Zn(2+) as a cofactor.

It catalyses the reaction 5-(methylsulfanyl)-D-ribulose 1-phosphate = 5-methylsulfanyl-2,3-dioxopentyl phosphate + H2O. The protein operates within amino-acid biosynthesis; L-methionine biosynthesis via salvage pathway; L-methionine from S-methyl-5-thio-alpha-D-ribose 1-phosphate: step 2/6. Catalyzes the dehydration of methylthioribulose-1-phosphate (MTRu-1-P) into 2,3-diketo-5-methylthiopentyl-1-phosphate (DK-MTP-1-P). This Klebsiella pneumoniae (strain 342) protein is Methylthioribulose-1-phosphate dehydratase.